The following is a 172-amino-acid chain: Lipoprotein signal peptidase (172 aa).

A run of 3 helical transmembrane segments spans residues 10–30 (LIWLLLSVLVVGLDQWSKAWV), 68–88 (WQLWFFTALAVGISGLLAFWL), and 98–118 (SALPYALVIGGAIGNVIDRLM). Residues D124 and D142 contribute to the active site. The chain crosses the membrane as a helical span at residues 138–158 (FNIADSAIVGGAIGIAVFGLF).

This sequence belongs to the peptidase A8 family.

It localises to the cell inner membrane. It catalyses the reaction Release of signal peptides from bacterial membrane prolipoproteins. Hydrolyzes -Xaa-Yaa-Zaa-|-(S,diacylglyceryl)Cys-, in which Xaa is hydrophobic (preferably Leu), and Yaa (Ala or Ser) and Zaa (Gly or Ala) have small, neutral side chains.. The protein operates within protein modification; lipoprotein biosynthesis (signal peptide cleavage). In terms of biological role, this protein specifically catalyzes the removal of signal peptides from prolipoproteins. The polypeptide is Lipoprotein signal peptidase (Xanthomonas euvesicatoria pv. vesicatoria (strain 85-10) (Xanthomonas campestris pv. vesicatoria)).